A 281-amino-acid chain; its full sequence is Ribosomal protein L11 methyltransferase (281 aa).

Residues Thr133, Gly154, Asp175, and Asn216 each coordinate S-adenosyl-L-methionine.

This sequence belongs to the methyltransferase superfamily. PrmA family.

It is found in the cytoplasm. The catalysed reaction is L-lysyl-[protein] + 3 S-adenosyl-L-methionine = N(6),N(6),N(6)-trimethyl-L-lysyl-[protein] + 3 S-adenosyl-L-homocysteine + 3 H(+). Its function is as follows. Methylates ribosomal protein L11. In Campylobacter jejuni (strain RM1221), this protein is Ribosomal protein L11 methyltransferase.